A 671-amino-acid chain; its full sequence is Peroxisomal membrane protein PEX17 (671 aa).

8 consecutive transmembrane segments (helical) span residues 127 to 147, 187 to 207, 212 to 232, 258 to 278, 318 to 338, 372 to 392, 475 to 495, and 504 to 524; these read LPLLAGLILADYDISADGPTL, VPVLACISIAQVYSLLGDVAI, FLQVGLDLIFSNYGLEMGTAL, VVALLNTFAHIASSCIVHVDI, YLKWELFTLCIIMQGIANMLL, FAAYDYVFFSAIDVLLSEYAP, LVEAAHSVILAGLAVPTNAVV, and MGGVLPLFPGVFSWNQFVLAI.

The protein resides in the peroxisome membrane. In terms of biological role, involved in peroxisome biosynthesis. Required for the import of a subset of matrix proteins into peroxisomes. This Yarrowia lipolytica (strain CLIB 122 / E 150) (Yeast) protein is Peroxisomal membrane protein PEX17 (PEX17).